We begin with the raw amino-acid sequence, 37 residues long: MDEDDWDDYDYGTYECGCCTCCGCTCYYDEWDEEDDL.

The protein is Gene 40 protein (40) of Mycobacterium phage L5 (Mycobacteriophage L5).